Consider the following 71-residue polypeptide: Heat-stable enterotoxin II (71 aa).

The first 23 residues, 1-23, serve as a signal peptide directing secretion; it reads MKKNIAFLLASMFVFSIATNAYA. 2 cysteine pairs are disulfide-bonded: Cys-33–Cys-71 and Cys-44–Cys-59.

The protein localises to the secreted. Functionally, toxin which activates the particulate form of guanylate cyclase and increases cyclic GMP levels within the host intestinal epithelial cells. The polypeptide is Heat-stable enterotoxin II (stiI) (Escherichia coli).